Consider the following 683-residue polypeptide: Methionine--tRNA ligase (683 aa).

Positions 14 to 24 match the 'HIGH' region motif; the sequence is PYANGSIHLGH. Residues Cys145, Cys148, Cys158, and Cys161 each contribute to the Zn(2+) site. The short motif at 331–335 is the 'KMSKS' region element; it reads KMSKS. Residue Lys334 participates in ATP binding. In terms of domain architecture, tRNA-binding spans 581-683; the sequence is AFAAVDLRVA…SGAKPGQRIK (103 aa).

The protein belongs to the class-I aminoacyl-tRNA synthetase family. MetG type 1 subfamily. As to quaternary structure, homodimer. It depends on Zn(2+) as a cofactor.

It is found in the cytoplasm. It catalyses the reaction tRNA(Met) + L-methionine + ATP = L-methionyl-tRNA(Met) + AMP + diphosphate. Its function is as follows. Is required not only for elongation of protein synthesis but also for the initiation of all mRNA translation through initiator tRNA(fMet) aminoacylation. The sequence is that of Methionine--tRNA ligase from Pseudomonas fluorescens (strain SBW25).